A 641-amino-acid chain; its full sequence is 1-deoxy-D-xylulose-5-phosphate synthase (641 aa).

Thiamine diphosphate contacts are provided by residues histidine 79 and 120 to 122; that span reads AHS. Aspartate 151 is a Mg(2+) binding site. Thiamine diphosphate contacts are provided by residues 152–153, asparagine 180, tyrosine 290, and glutamate 372; that span reads GA. Mg(2+) is bound at residue asparagine 180.

This sequence belongs to the transketolase family. DXPS subfamily. In terms of assembly, homodimer. It depends on Mg(2+) as a cofactor. The cofactor is thiamine diphosphate.

The catalysed reaction is D-glyceraldehyde 3-phosphate + pyruvate + H(+) = 1-deoxy-D-xylulose 5-phosphate + CO2. Its pathway is metabolic intermediate biosynthesis; 1-deoxy-D-xylulose 5-phosphate biosynthesis; 1-deoxy-D-xylulose 5-phosphate from D-glyceraldehyde 3-phosphate and pyruvate: step 1/1. In terms of biological role, catalyzes the acyloin condensation reaction between C atoms 2 and 3 of pyruvate and glyceraldehyde 3-phosphate to yield 1-deoxy-D-xylulose-5-phosphate (DXP). The chain is 1-deoxy-D-xylulose-5-phosphate synthase from Bradyrhizobium sp. (strain ORS 278).